Reading from the N-terminus, the 406-residue chain is Imidazolonepropionase (406 aa).

The Fe(3+) site is built by histidine 72 and histidine 74. Histidine 72 and histidine 74 together coordinate Zn(2+). 4-imidazolone-5-propanoate is bound by residues arginine 81, tyrosine 144, and histidine 177. Residue tyrosine 144 participates in N-formimidoyl-L-glutamate binding. Histidine 242 serves as a coordination point for Fe(3+). Histidine 242 serves as a coordination point for Zn(2+). Glutamine 245 provides a ligand contact to 4-imidazolone-5-propanoate. Aspartate 317 provides a ligand contact to Fe(3+). Aspartate 317 contacts Zn(2+). N-formimidoyl-L-glutamate contacts are provided by asparagine 319 and glycine 321. Threonine 322 is a binding site for 4-imidazolone-5-propanoate.

The protein belongs to the metallo-dependent hydrolases superfamily. HutI family. It depends on Zn(2+) as a cofactor. Fe(3+) serves as cofactor.

The protein resides in the cytoplasm. It carries out the reaction 4-imidazolone-5-propanoate + H2O = N-formimidoyl-L-glutamate. Its pathway is amino-acid degradation; L-histidine degradation into L-glutamate; N-formimidoyl-L-glutamate from L-histidine: step 3/3. Functionally, catalyzes the hydrolytic cleavage of the carbon-nitrogen bond in imidazolone-5-propanoate to yield N-formimidoyl-L-glutamate. It is the third step in the universal histidine degradation pathway. The protein is Imidazolonepropionase of Yersinia enterocolitica serotype O:8 / biotype 1B (strain NCTC 13174 / 8081).